Reading from the N-terminus, the 237-residue chain is Uridylate kinase (237 aa).

10–13 (KLSG) contacts ATP. Gly-51 provides a ligand contact to UMP. ATP contacts are provided by Gly-52 and Arg-56. Residues Asp-71 and 132-139 (MGMPFFST) each bind UMP. Asn-160, Tyr-166, and Asp-169 together coordinate ATP.

The protein belongs to the UMP kinase family. In terms of assembly, homohexamer.

It is found in the cytoplasm. It catalyses the reaction UMP + ATP = UDP + ADP. The protein operates within pyrimidine metabolism; CTP biosynthesis via de novo pathway; UDP from UMP (UMPK route): step 1/1. Inhibited by UTP. Its function is as follows. Catalyzes the reversible phosphorylation of UMP to UDP. This Nocardioides sp. (strain ATCC BAA-499 / JS614) protein is Uridylate kinase.